Here is a 279-residue protein sequence, read N- to C-terminus: Undecaprenyl-diphosphatase (279 aa).

The next 8 membrane-spanning stretches (helical) occupy residues 17-37 (TEFLPVSSTGHLFLFSYFFPF), 46-66 (AFEDLFDIFIQTGAILSVVVL), 92-112 (FQFYLNLIVGILPILILGFLL), 123-143 (SDLLLILGMSWFVGGIIMVFV), 156-176 (IGFKESIIVGFLQCFALIPGV), 197-217 (AEFSFFLAIPVLTLAGIYKLY), 226-246 (ETIGLLLFGSIISFIICYFII), and 257-277 (SFISFGVYRILLGLLVILYFV).

The protein belongs to the UppP family.

It localises to the cell inner membrane. It catalyses the reaction di-trans,octa-cis-undecaprenyl diphosphate + H2O = di-trans,octa-cis-undecaprenyl phosphate + phosphate + H(+). In terms of biological role, catalyzes the dephosphorylation of undecaprenyl diphosphate (UPP). Confers resistance to bacitracin. The chain is Undecaprenyl-diphosphatase from Leptospira biflexa serovar Patoc (strain Patoc 1 / ATCC 23582 / Paris).